A 44-amino-acid chain; its full sequence is Cytochrome b559 subunit beta (44 aa).

The helical transmembrane segment at 19-35 threads the bilayer; the sequence is WLSIHALAVPTIFFLGS. Histidine 23 lines the heme pocket.

This sequence belongs to the PsbE/PsbF family. Heterodimer of an alpha subunit and a beta subunit. PSII is composed of 1 copy each of membrane proteins PsbA, PsbB, PsbC, PsbD, PsbE, PsbF, PsbH, PsbI, PsbJ, PsbK, PsbL, PsbM, PsbT, PsbX, PsbY, PsbZ, Psb30/Ycf12, at least 3 peripheral proteins of the oxygen-evolving complex and a large number of cofactors. It forms dimeric complexes. Heme b is required as a cofactor.

It localises to the plastid. It is found in the chloroplast thylakoid membrane. In terms of biological role, this b-type cytochrome is tightly associated with the reaction center of photosystem II (PSII). PSII is a light-driven water:plastoquinone oxidoreductase that uses light energy to abstract electrons from H(2)O, generating O(2) and a proton gradient subsequently used for ATP formation. It consists of a core antenna complex that captures photons, and an electron transfer chain that converts photonic excitation into a charge separation. This is Cytochrome b559 subunit beta from Tetradesmus obliquus (Green alga).